The sequence spans 299 residues: Protein sprouty homolog 4 (299 aa).

An N-acetylmethionine modification is found at Met1. 2 disordered regions span residues 50–79 (NDYI…PTPA) and 92–127 (FSGR…ASPR). Low complexity predominate over residues 92 to 107 (FSGRPSSVSSSSSTSS). Ser125 is modified (phosphoserine). The region spanning 166–273 (KCKECASPRT…GYDRLRRPGC (108 aa)) is the SPR domain.

This sequence belongs to the sprouty family. As to quaternary structure, interacts (via C-terminus) with TESK1 (via both C- and N-termini); the interaction inhibits TESK1 kinase activity. Interacts with RAF1. Interacts with CAV1 (via C-terminus).

The protein localises to the cytoplasm. It localises to the cell projection. The protein resides in the ruffle membrane. In terms of biological role, suppresses the insulin receptor and EGFR-transduced MAPK signaling pathway, but does not inhibit MAPK activation by a constitutively active mutant Ras. Probably impairs the formation of GTP-Ras. Inhibits Ras-independent, but not Ras-dependent, activation of RAF1. Represses integrin-mediated cell spreading via inhibition of TESK1-mediated phosphorylation of cofilin. In Bos taurus (Bovine), this protein is Protein sprouty homolog 4 (SPRY4).